The primary structure comprises 156 residues: MRRAICPGSFDPLHLGHCAVIRRATLLFDEVVVAVSTNPNKTHRFSEAQRIELVREVFADDPAVVVEPLESGLIADYAERRGAVALVKGLRNGADYDYELPMATMNRSLTGVETVFLPGEPSLLHVSSSLVMEVAALGGDVTSFVPPEVLRALEDE.

Serine 9 serves as a coordination point for substrate. ATP is bound by residues 9 to 10 and histidine 17; that span reads SF. Residues lysine 41, isoleucine 74, and lysine 88 each contribute to the substrate site. Residues 89–91, glutamate 99, and 123–129 contribute to the ATP site; these read GLR and LLHVSSS.

It belongs to the bacterial CoaD family. In terms of assembly, homohexamer. It depends on Mg(2+) as a cofactor.

Its subcellular location is the cytoplasm. The catalysed reaction is (R)-4'-phosphopantetheine + ATP + H(+) = 3'-dephospho-CoA + diphosphate. The protein operates within cofactor biosynthesis; coenzyme A biosynthesis; CoA from (R)-pantothenate: step 4/5. Functionally, reversibly transfers an adenylyl group from ATP to 4'-phosphopantetheine, yielding dephospho-CoA (dPCoA) and pyrophosphate. The polypeptide is Phosphopantetheine adenylyltransferase (Kocuria rhizophila (strain ATCC 9341 / DSM 348 / NBRC 103217 / DC2201)).